Here is a 59-residue protein sequence, read N- to C-terminus: MAKTIKITQTRSSIGRLPKHKATLLGLGLRRINHTVEREDTPAVRGMVNAISYMVKVEE.

The protein belongs to the universal ribosomal protein uL30 family. Part of the 50S ribosomal subunit.

The polypeptide is Large ribosomal subunit protein uL30 (Erwinia tasmaniensis (strain DSM 17950 / CFBP 7177 / CIP 109463 / NCPPB 4357 / Et1/99)).